We begin with the raw amino-acid sequence, 384 residues long: Protein V (384 aa).

Disordered stretches follow at residues 1-23 (MDQD…GGRE) and 38-318 (SEPT…KKGH). Residues 7–20 (ILKEDSEVEREAPG) are compositionally biased toward basic and acidic residues. Residues 50–59 (LHNTINTPQG) show a composition bias toward polar residues. Ser-68 carries the post-translational modification Phosphoserine; by host. Residues 83–101 (RSGEESRVSGRTSKPEAEA) show a composition bias toward basic and acidic residues. A Phosphoserine; by host modification is found at Ser-125. The segment covering 150–168 (GIEDENREMAAHPDKRGED) has biased composition (basic and acidic residues). A compositionally biased stretch (polar residues) spans 191-206 (ASNNGRSMEPGSSHSA). Phosphoserine; by host is present on residues Ser-192, Ser-249, Ser-257, and Ser-260. Zn(2+) contacts are provided by His-318, Cys-337, Cys-341, Cys-353, Cys-355, Cys-358, Cys-362, and Cys-365.

This sequence belongs to the paramyxoviruses V protein family. In terms of assembly, interacts with host IFIH1/MDA5 and DHX58/LGP2. Interacts with host IRF3. Interacts with host RIGI regulatory protein (via CARDs domain) and host TRIM25 (via SPRY domain); these interactions prevent TRIM25-mediated ubiquitination of RIG-I and disrupts downstream RIG-I signaling.

The protein localises to the host cytoplasm. Functionally, plays an essential role in the inhibition of host immune response. Prevents the establishment of cellular antiviral state by blocking interferon-alpha/beta (IFN-alpha/beta) production and signaling pathway. Interacts with host IFIH1/MDA5 and DHX58/LGP2 to inhibit the transduction pathway involved in the activation of IFN-beta promoter, thus protecting the virus against cell antiviral state. Also interacts with and inhibits host IRF3. Blocks the type I interferon signaling pathway by disrupting the RIG-I signaling pathway. The chain is Protein V (P/V/C) from Sendai virus (strain Harris) (SeV).